The primary structure comprises 265 residues: Tryptophan synthase alpha chain (265 aa).

Active-site proton acceptor residues include Glu49 and Asp60.

This sequence belongs to the TrpA family. As to quaternary structure, tetramer of two alpha and two beta chains.

The enzyme catalyses (1S,2R)-1-C-(indol-3-yl)glycerol 3-phosphate + L-serine = D-glyceraldehyde 3-phosphate + L-tryptophan + H2O. The protein operates within amino-acid biosynthesis; L-tryptophan biosynthesis; L-tryptophan from chorismate: step 5/5. The alpha subunit is responsible for the aldol cleavage of indoleglycerol phosphate to indole and glyceraldehyde 3-phosphate. The sequence is that of Tryptophan synthase alpha chain from Paracoccus denitrificans (strain Pd 1222).